We begin with the raw amino-acid sequence, 571 residues long: Sulfite reductase [NADPH] hemoprotein beta-component (571 aa).

Cys-436, Cys-442, Cys-481, and Cys-485 together coordinate [4Fe-4S] cluster. Siroheme is bound at residue Cys-485.

The protein belongs to the nitrite and sulfite reductase 4Fe-4S domain family. In terms of assembly, alpha(8)-beta(8). The alpha component is a flavoprotein, the beta component is a hemoprotein. Requires siroheme as cofactor. [4Fe-4S] cluster serves as cofactor.

The catalysed reaction is hydrogen sulfide + 3 NADP(+) + 3 H2O = sulfite + 3 NADPH + 4 H(+). Its pathway is sulfur metabolism; hydrogen sulfide biosynthesis; hydrogen sulfide from sulfite (NADPH route): step 1/1. In terms of biological role, component of the sulfite reductase complex that catalyzes the 6-electron reduction of sulfite to sulfide. This is one of several activities required for the biosynthesis of L-cysteine from sulfate. The sequence is that of Sulfite reductase [NADPH] hemoprotein beta-component (cysI) from Bacillus subtilis (strain 168).